Here is an 818-residue protein sequence, read N- to C-terminus: uncharacterized protein (818 aa).

Low complexity-rich tracts occupy residues 1–33 (MYNN…NYIS), 44–68 (NNFL…PQQQ), and 97–150 (NNSN…TKSN). Disordered stretches follow at residues 1–68 (MYNN…PQQQ), 92–150 (LNTG…TKSN), 164–220 (KLDN…KYHE), 284–306 (NMNG…NNSD), and 415–445 (NINK…NNNN). Composition is skewed to acidic residues over residues 172 to 190 (SEEE…EEKE) and 205 to 214 (DNNSQDEDKE). A compositionally biased stretch (low complexity) spans 284–302 (NMNGSSDSSDSSNSSGHSR). Residues 534–554 (IIAIIVIVWPLIANLTYKFIV) traverse the membrane as a helical segment. Residues 779-808 (ANNFMSDSNRSPSSSSSSSSSTSDSENGML) form a disordered region. Residues 784–803 (SDSNRSPSSSSSSSSSTSDS) show a composition bias toward low complexity.

Its subcellular location is the membrane. This is an uncharacterized protein from Dictyostelium discoideum (Social amoeba).